The sequence spans 275 residues: Probable CCR4-associated factor 1 homolog 7 (275 aa).

4 residues coordinate a divalent metal cation: D40, E42, D167, and D236.

It belongs to the CAF1 family. Component of the CCR4-NOT complex, at least composed of CRR4 and CAF1 proteins. The cofactor is a divalent metal cation.

The protein resides in the nucleus. It localises to the cytoplasm. It catalyses the reaction Exonucleolytic cleavage of poly(A) to 5'-AMP.. In terms of biological role, ubiquitous transcription factor required for a diverse set of processes. It is a component of the CCR4 complex involved in the control of gene expression. This Arabidopsis thaliana (Mouse-ear cress) protein is Probable CCR4-associated factor 1 homolog 7 (CAF1-7).